A 721-amino-acid chain; its full sequence is Solute carrier family 12 member 8 (721 aa).

A run of 11 helical transmembrane segments spans residues 53-73 (FGTW…VVLF), 84-104 (GVLL…VTVL), 115-135 (IGSG…VGGT), 136-156 (IGVL…TGFA), 174-194 (ISLA…KWII), 196-216 (LQLL…IGSF), 247-267 (FFTV…GFNM), 283-303 (LAAI…LGAI), 321-341 (LVGG…CMGG), 374-394 (PVAA…IGQV), and 397-417 (LAPI…YSYF). Disordered stretches follow at residues 473–505 (PNHT…KQTL) and 533–580 (NESQ…STVA). Acidic residues predominate over residues 553 to 565 (TESDEPDSEEDVD). 2 consecutive transmembrane segments (helical) span residues 606 to 626 (FLGA…YALV) and 628 to 648 (LGVA…LNPG).

The protein belongs to the SLC12A transporter family.

It is found in the membrane. Functionally, cation/chloride cotransporter. In Xenopus laevis (African clawed frog), this protein is Solute carrier family 12 member 8 (slc12a8).